Reading from the N-terminus, the 193-residue chain is p53 apoptosis effector related to PMP-22 (193 aa).

Transmembrane regions (helical) follow at residues 12–32, 81–101, 110–130, and 151–171; these read RWILPLLLLSAIAFDIIALAG, LFCGFIILCICFILSFFALCG, VIGGLLALAAIFQIISLVIYP, and WAYGFGWAATIILIGCSFFFC.

Belongs to the TMEM47 family. As to expression, expressed in the stratified squamous skin epithelium of the skin and the tongue, but not in simple epithelia (at protein level). Expressed in the oral epithelium, tongue epithelium and skin (at protein level). More abundant in areas of lower flow stress in the inner curvature compared to the outer curvature regions of the aorta (at protein level). Expressed in luminal cells and myoepithelium cells of the mammary epithelium (at protein level). Expression increases during the early stages of pregnancy before decreasing before birth, expression continues to be weak during involution which mirrors decreased desmosome abundance and organization at these time points (at protein level). Expressed by epithelial cells at the mucosal surface in the proximal colon (at protein level). Expressed in apoptotic cells.

It localises to the cell junction. The protein resides in the desmosome. The protein localises to the cell membrane. Its subcellular location is the cytoplasm. In terms of biological role, component of intercellular desmosome junctions. Plays a role in stratified epithelial integrity and cell-cell adhesion by promoting desmosome assembly. Thereby plays a role in barrier function of the skin against infection. Plays a role in mammary epithelial tissue homeostasis and remodeling during and after pregnancy, potentially via its involvement in desmosome cell-cell junctions. Required for tooth enamel development via facilitating desmosome-mediated ameloblast adhesion to the stratum intermedium during the transitional stage of amelogenesis. May also play a role in downstream transcriptional regulation of other genes involved in amelogenesis such as AMBN, ENAM, MMP20 and KLK4. Plays a role as an effector in the TP53-dependent apoptotic pathway. Positively regulates apoptosis in T-helper 17 (Th17) cell populations via caspase-dependent signaling. Promotes neutrophil transepithelial migration in response to chemoattractants such as hepoxilin A3 (HXA3), N-Formylmethionyl-leucyl-phenylalanine (fMLP) and CXCL8/IL-8. May act as a positive regulator of endothelial cell apoptosis in response to blood flow-derived shear stress. The polypeptide is p53 apoptosis effector related to PMP-22 (Mus musculus (Mouse)).